A 307-amino-acid polypeptide reads, in one-letter code: Secondary metabolism regulator LAE1 (307 aa).

Belongs to the methyltransferase superfamily. LaeA methyltransferase family. In terms of assembly, component of the heterotrimeric velvet complex composed of LAE1, VEL1 and VEL2; VEL1 acting as a bridging protein between LAE1 and VEL2.

The protein resides in the nucleus. The enzyme catalyses L-methionyl-[protein] + S-adenosyl-L-methionine = S-methyl-L-methionyl-[protein] + S-adenosyl-L-homocysteine. In terms of biological role, methyltransferase that performs automethylation. No other methyl-accepting substrate has been identified yet. Component of the velvet transcription factor complex that acts as a global regulator for secondary metabolite gene expression. Controls the expression of the T-toxin gene cluster. Promotes oxidative stress tolerance and acts as a virulence factors during infection. Negatively regulate mycelial pigmentation and controls sexual development, as well as asexual development during vegetative growth. In Cochliobolus heterostrophus (strain C5 / ATCC 48332 / race O) (Southern corn leaf blight fungus), this protein is Secondary metabolism regulator LAE1.